A 100-amino-acid polypeptide reads, in one-letter code: Urease subunit gamma (100 aa).

The protein belongs to the urease gamma subunit family. In terms of assembly, heterotrimer of UreA (gamma), UreB (beta) and UreC (alpha) subunits. Three heterotrimers associate to form the active enzyme.

It localises to the cytoplasm. The catalysed reaction is urea + 2 H2O + H(+) = hydrogencarbonate + 2 NH4(+). It participates in nitrogen metabolism; urea degradation; CO(2) and NH(3) from urea (urease route): step 1/1. The sequence is that of Urease subunit gamma from Herpetosiphon aurantiacus (strain ATCC 23779 / DSM 785 / 114-95).